Reading from the N-terminus, the 400-residue chain is D-alanyl-D-alanine carboxypeptidase DacC (400 aa).

The first 27 residues, 1-27 (MTQYSSLLRGLAAGSAFLFLFAPTAFA), serve as a signal peptide directing secretion. S66 (acyl-ester intermediate) is an active-site residue. Residue K69 is the Proton acceptor of the active site. The active site involves S132. K235 is a binding site for substrate. The required for inner membrane binding stretch occupies residues 383 to 400 (VWDFVMMKFHQWFGSWFS).

Belongs to the peptidase S11 family.

It localises to the cell inner membrane. The catalysed reaction is Preferential cleavage: (Ac)2-L-Lys-D-Ala-|-D-Ala. Also transpeptidation of peptidyl-alanyl moieties that are N-acyl substituents of D-alanine.. The protein operates within cell wall biogenesis; peptidoglycan biosynthesis. Functionally, removes C-terminal D-alanyl residues from sugar-peptide cell wall precursors. The sequence is that of D-alanyl-D-alanine carboxypeptidase DacC (dacC) from Escherichia coli (strain K12).